A 417-amino-acid polypeptide reads, in one-letter code: Senescence-associated protein AAF, chloroplastic (417 aa).

The N-terminal 36 residues, 1–36 (MALNVSKVVPNSPILVKSVNASRSRRVLLAYVHHPL), are a transit peptide targeting the chloroplast.

This sequence belongs to the ATA15/OSA15 family. In terms of tissue distribution, expressed in leaves. Expressed in 7-day-old seedlings, roots, rosette leaves, cauline leaves and flower buds.

The protein localises to the plastid. It is found in the chloroplast. Functionally, involved in modulation of redox homeostasis to regulate leaf senescence mediated by age and stress factors during plant development. Its function is dependent of EIN2, a central factor of ethylene signaling. The protein is Senescence-associated protein AAF, chloroplastic of Arabidopsis thaliana (Mouse-ear cress).